The chain runs to 371 residues: Cytochrome b (371 aa).

The next 4 helical transmembrane spans lie at 25 to 45 (FGSM…FLAI), 69 to 90 (WTMQ…YIHI), 105 to 125 (WLSG…GYVL), and 170 to 190 (FFAL…AHIM). Positions 75 and 89 each coordinate heme b. Positions 174 and 188 each coordinate heme b. H193 contacts a ubiquinone. Helical transmembrane passes span 218–238 (NKDM…LSFL), 280–300 (LGGT…PFTH), 312–332 (MTQT…WTAT), and 339–358 (FMFI…FMNP).

Belongs to the cytochrome b family. As to quaternary structure, the cytochrome bc1 complex contains 3 respiratory subunits (MT-CYB, CYC1 and UQCRFS1), 2 core proteins (UQCRC1 and UQCRC2) and probably 6 low-molecular weight proteins. Heme b serves as cofactor.

Its subcellular location is the mitochondrion inner membrane. Functionally, component of the ubiquinol-cytochrome c reductase complex (complex III or cytochrome b-c1 complex) that is part of the mitochondrial respiratory chain. The b-c1 complex mediates electron transfer from ubiquinol to cytochrome c. Contributes to the generation of a proton gradient across the mitochondrial membrane that is then used for ATP synthesis. The protein is Cytochrome b (MT-CYB) of Elapsoidea nigra (Usambara garter snake).